The sequence spans 619 residues: Dihydroxy-acid dehydratase (619 aa).

Position 81 (Asp81) interacts with Mg(2+). Cys122 is a binding site for [2Fe-2S] cluster. Asp123 and Lys124 together coordinate Mg(2+). At Lys124 the chain carries N6-carboxylysine. Residue Cys195 participates in [2Fe-2S] cluster binding. Position 491 (Glu491) interacts with Mg(2+). Ser517 acts as the Proton acceptor in catalysis.

This sequence belongs to the IlvD/Edd family. Homodimer. Requires [2Fe-2S] cluster as cofactor. It depends on Mg(2+) as a cofactor.

The enzyme catalyses (2R)-2,3-dihydroxy-3-methylbutanoate = 3-methyl-2-oxobutanoate + H2O. The catalysed reaction is (2R,3R)-2,3-dihydroxy-3-methylpentanoate = (S)-3-methyl-2-oxopentanoate + H2O. It participates in amino-acid biosynthesis; L-isoleucine biosynthesis; L-isoleucine from 2-oxobutanoate: step 3/4. The protein operates within amino-acid biosynthesis; L-valine biosynthesis; L-valine from pyruvate: step 3/4. Functions in the biosynthesis of branched-chain amino acids. Catalyzes the dehydration of (2R,3R)-2,3-dihydroxy-3-methylpentanoate (2,3-dihydroxy-3-methylvalerate) into 2-oxo-3-methylpentanoate (2-oxo-3-methylvalerate) and of (2R)-2,3-dihydroxy-3-methylbutanoate (2,3-dihydroxyisovalerate) into 2-oxo-3-methylbutanoate (2-oxoisovalerate), the penultimate precursor to L-isoleucine and L-valine, respectively. This is Dihydroxy-acid dehydratase from Rhodopseudomonas palustris (strain HaA2).